A 219-amino-acid polypeptide reads, in one-letter code: Large ribosomal subunit protein uL3 (219 aa).

An N5-methylglutamine modification is found at Gln-151.

Belongs to the universal ribosomal protein uL3 family. In terms of assembly, part of the 50S ribosomal subunit. Forms a cluster with proteins L14 and L19. In terms of processing, methylated by PrmB.

In terms of biological role, one of the primary rRNA binding proteins, it binds directly near the 3'-end of the 23S rRNA, where it nucleates assembly of the 50S subunit. The protein is Large ribosomal subunit protein uL3 of Blochmanniella floridana.